A 505-amino-acid chain; its full sequence is Maturase K (505 aa).

This sequence belongs to the intron maturase 2 family. MatK subfamily.

The protein localises to the plastid. It localises to the chloroplast. In terms of biological role, usually encoded in the trnK tRNA gene intron. Probably assists in splicing its own and other chloroplast group II introns. In Rosa stellata (Star rose), this protein is Maturase K.